Here is a 254-residue protein sequence, read N- to C-terminus: Hydroxyacylglutathione hydrolase (254 aa).

Zn(2+)-binding residues include His-54, His-56, Asp-58, His-59, His-111, Asp-130, and His-168.

This sequence belongs to the metallo-beta-lactamase superfamily. Glyoxalase II family. In terms of assembly, monomer. Zn(2+) serves as cofactor.

It carries out the reaction an S-(2-hydroxyacyl)glutathione + H2O = a 2-hydroxy carboxylate + glutathione + H(+). It participates in secondary metabolite metabolism; methylglyoxal degradation; (R)-lactate from methylglyoxal: step 2/2. Its function is as follows. Thiolesterase that catalyzes the hydrolysis of S-D-lactoyl-glutathione to form glutathione and D-lactic acid. This chain is Hydroxyacylglutathione hydrolase, found in Legionella pneumophila (strain Corby).